Reading from the N-terminus, the 411-residue chain is Lysosome-associated membrane glycoprotein 3 (411 aa).

Residues 1 to 21 form the signal peptide; sequence MPGQISAVAVLFLSLTVILHG. Topologically, residues 22–376 are lumenal; the sequence is YQIREKEFPK…NVNECLSDYT (355 aa). Polar residues predominate over residues 172–192; sequence HKSTTNQRPTLSTNVLGTSTP. The tract at residues 172–204 is disordered; it reads HKSTTNQRPTLSTNVLGTSTPTHKDRSTTSPVP. Asn227 carries an N-linked (GlcNAc...) asparagine glycan. 2 cysteine pairs are disulfide-bonded: Cys232–Cys269 and Cys334–Cys371. The chain crosses the membrane as a helical span at residues 377–397; sequence VVLPMVAIIVVVICVVGLSVY. The Cytoplasmic segment spans residues 398–411; the sequence is KIRQRHQSSAYQRI.

The protein belongs to the LAMP family. Monomer. Interacts with FURIN.

It is found in the cell surface. The protein resides in the lysosome membrane. Its subcellular location is the cytoplasmic vesicle membrane. It localises to the early endosome membrane. In terms of biological role, lysosomal membrane glycoprotein which plays a role in the unfolded protein response (UPR) that contributes to protein degradation and cell survival during proteasomal dysfunction. Plays a role in the process of fusion of the lysosome with the autophagosome, thereby modulating the autophagic process. Promotes hepatocellular lipogenesis through activation of the PI3K/Akt pathway. May also play a role in dendritic cell function and in adaptive immunity. This is Lysosome-associated membrane glycoprotein 3 (Lamp3) from Mus musculus (Mouse).